Here is a 388-residue protein sequence, read N- to C-terminus: Probable proton-coupled zinc antiporter SLC30A3 (388 aa).

The disordered stretch occupies residues Met-1–Leu-41. The Cytoplasmic segment spans residues Met-1–Gln-75. Residues Ser-63 and Ser-66 each carry the phosphoserine modification. The helical transmembrane segment at Leu-76 to Leu-96 threads the bilayer. Residues Ala-97–Asp-105 are Lumenal-facing. A helical membrane pass occupies residues Ala-106–Ser-126. Zn(2+) is bound by residues His-108 and Asp-112. The Cytoplasmic portion of the chain corresponds to Thr-127 to Gly-145. Residues Ala-146–Leu-166 traverse the membrane as a helical segment. Topologically, residues Arg-167–Ala-177 are lumenal. A helical membrane pass occupies residues Gly-178 to Leu-198. The Cytoplasmic portion of the chain corresponds to His-199 to Ala-235. A helical transmembrane segment spans residues Phe-236–Ile-256. Zn(2+) contacts are provided by His-238 and Asp-242. The Lumenal segment spans residues Tyr-257–Lys-263. Residues Val-264–Thr-284 form a helical membrane-spanning segment. Residues Leu-285 to Ala-388 lie on the Cytoplasmic side of the membrane.

The protein belongs to the cation diffusion facilitator (CDF) transporter (TC 2.A.4) family. SLC30A subfamily. Homodimer. Homodimerization is negligible compared to the human protein. It could explain the lower efficiency of zinc transport. Interacts with TMEM163. Expression is restricted to brain (at protein level). In the brain, most abundant in hippocampus and cerebral cortex. The mRNA is also detected in testis, expression being restricted to germ cells and highest in pachytene spermatocytes and round spermatids.

The protein localises to the cytoplasmic vesicle. It is found in the secretory vesicle. Its subcellular location is the synaptic vesicle membrane. It localises to the synapse. The protein resides in the synaptosome. The protein localises to the late endosome membrane. It is found in the lysosome membrane. The enzyme catalyses Zn(2+)(in) + 2 H(+)(out) = Zn(2+)(out) + 2 H(+)(in). Its function is as follows. Probable proton-coupled zinc ion antiporter mediating the import of zinc from cytoplasm into synaptic vesicles and participating to cellular zinc ion homeostasis in the brain. The protein is Probable proton-coupled zinc antiporter SLC30A3 of Mus musculus (Mouse).